The chain runs to 357 residues: G-protein coupled receptor 183 (357 aa).

At 1–27 (MANNFTTPLATSHGNNCDLYAHHSTAR) the chain is on the extracellular side. Asn4 is a glycosylation site (N-linked (GlcNAc...) asparagine). The chain crosses the membrane as a helical span at residues 28-53 (VLMPLHYSLVFIIGLVGNLLALVVIV). At 54–73 (QNRKKINSTTLYSMNLVISD) the chain is on the cytoplasmic side. Residues 74–91 (ILFTTALPTRIAYYALGF) traverse the membrane as a helical segment. Residue Arg83 participates in 7alpha,25-dihydroxycholesterol binding. At 92-101 (DWRIGDALCR) the chain is on the extracellular side. Cysteines 100 and 177 form a disulfide. The helical transmembrane segment at 102 to 123 (VTALVFYINTYAGVNFMTCLSI) threads the bilayer. 2 residues coordinate 7alpha,25-dihydroxycholesterol: Tyr108 and Tyr112. The interaction with G proteins stretch occupies residues 122-130 (SIDRFFAVV). Residues 124-145 (DRFFAVVHPLRYNKIKRIEYAK) lie on the Cytoplasmic side of the membrane. Residues 146–164 (GVCLSVWILVFAQTLPLLL) traverse the membrane as a helical segment. Topologically, residues 165 to 188 (TPMSKEEGDKTTCMEYPNFEGTAS) are extracellular. The chain crosses the membrane as a helical span at residues 189 to 211 (LPWILLGACLLGYVLPITVILLC). Topologically, residues 212-237 (YSQICCKLFRTAKQNPLTEKSGVNKK) are cytoplasmic. Residues 238-261 (ALNTIILIIVVFILCFTPYHVAII) form a helical membrane-spanning segment. Tyr256 lines the 7alpha,25-dihydroxycholesterol pocket. Residues 262 to 283 (QHMIKMLCSPGALECGARHSFQ) lie on the Extracellular side of the membrane. The chain crosses the membrane as a helical span at residues 284–308 (ISLHFTVCLMNFNCCMDPFIYFFAC). At 309–357 (KGYKRKVMKMLKRQVSVSISSAVRSAPEENSREMTESQMMIHSKASNGR) the chain is on the cytoplasmic side. 2 positions are modified to phosphoserine: Ser324 and Ser345. Residues 336-357 (EENSREMTESQMMIHSKASNGR) are disordered. Residues 344-357 (ESQMMIHSKASNGR) show a composition bias toward polar residues.

It belongs to the G-protein coupled receptor 1 family. As to quaternary structure, homodimer and heterodimer. Heterodimerizes with CXCR5; leading to modulate the interaction between of CXCL13 and CXCR5. Expressed in mature B-cells and increases in expression early after activation, before being down-regulated in germinal center B-cells. Expressed in astrocytes. Specifically expressed in CD4(+) dendritic cells but not in CD8(+) dendritic cells. Expressed in monocyte/osteoclasts precursors and mature osteoclasts.

It is found in the cell membrane. Functionally, G-protein coupled receptor expressed in lymphocytes that acts as a chemotactic receptor for B-cells, T-cells, splenic dendritic cells, monocytes/macrophages and astrocytes. Receptor for oxysterol 7-alpha,25-dihydroxycholesterol (7-alpha,25-OHC) and other related oxysterols. Mediates cell positioning and movement of a number of cells by binding the 7-alpha,25-OHC ligand that forms a chemotactic gradient. Binding of 7-alpha,25-OHC mediates the correct localization of B-cells during humoral immune responses. Collaborates with CXCR5 to mediate B-cell migration; probably by forming a heterodimer with CXCR5 that affects the interaction between of CXCL13 and CXCR5. Guides B-cell movement along the B-cell zone-T-cell zone boundary and later to interfollicular and outer follicular regions. Its specific expression during B-cell maturation helps position B-cells appropriately for mounting T-dependent antibody responses. Also acts as a chemotactic receptor for some T-cells upon binding to 7-alpha,25-OHC ligand. Promotes follicular helper T (Tfh) cells differentiation by positioning activated T-cells at the follicle-T-zone interface, promoting contact of newly activated CD4 T-cells with activated dendritic cells and exposing them to Tfh-cell-promoting inducible costimulator (ICOS) ligand. Expression in splenic dendritic cells is required for their homeostasis, localization and ability to induce B- and T-cell responses: GPR183 acts as a chemotactic receptor in dendritic cells that mediates the accumulation of CD4(+) dendritic cells in bridging channels. Regulates migration of astrocytes and is involved in communication between astrocytes and macrophages. Promotes osteoclast precursor migration to bone surfaces. Signals constitutively through G(i)-alpha, but not G(s)-alpha or G(q)-alpha. Signals constitutively also via MAPK1/3 (ERK1/2). The sequence is that of G-protein coupled receptor 183 from Mus musculus (Mouse).